The following is a 331-amino-acid chain: UDP-GalNAc:beta-1,3-N-acetylgalactosaminyltransferase 1 (331 aa).

The Cytoplasmic segment spans residues 1–20 (MAPAVLTAIPNRMSLRSLKW). Residues 21–43 (SLLLLSLLSFLVIWYLSLPHYNV) traverse the membrane as a helical; Signal-anchor for type II membrane protein segment. The Lumenal portion of the chain corresponds to 44–331 (IERVNWMYFY…VMLRNTTCHY (288 aa)). Residues Asn72, Asn154, Asn198, Asn212, and Asn326 are each glycosylated (N-linked (GlcNAc...) asparagine).

This sequence belongs to the glycosyltransferase 31 family. The cofactor is Mg(2+).

The protein resides in the golgi apparatus membrane. It carries out the reaction a globoside Gb3Cer (d18:1(4E)) + UDP-N-acetyl-alpha-D-galactosamine = a globoside Gb4Cer (d18:1(4E)) + UDP + H(+). The protein operates within protein modification; protein glycosylation. Functionally, transfers N-acetylgalactosamine onto globotriaosylceramide. Plays a critical role in preimplantation stage embryonic development. This chain is UDP-GalNAc:beta-1,3-N-acetylgalactosaminyltransferase 1 (B3galnt1), found in Rattus norvegicus (Rat).